A 239-amino-acid polypeptide reads, in one-letter code: Acyl-protein thioesterase 1 (239 aa).

Residues Ser-124, Asp-180, and His-213 each act as charge relay system in the active site.

Belongs to the AB hydrolase superfamily. AB hydrolase 2 family.

Its subcellular location is the cytoplasm. It localises to the nucleus. It carries out the reaction S-hexadecanoyl-L-cysteinyl-[protein] + H2O = L-cysteinyl-[protein] + hexadecanoate + H(+). Functionally, hydrolyzes fatty acids from S-acylated cysteine residues in proteins with a strong preference for palmitoylated G-alpha proteins over other acyl substrates. Mediates the deacylation of G-alpha proteins such as GPA1 in vivo, but has weak or no activity toward palmitoylated Ras proteins. Has weak lysophospholipase activity in vitro; however such activity may not exist in vivo. The protein is Acyl-protein thioesterase 1 of Emericella nidulans (strain FGSC A4 / ATCC 38163 / CBS 112.46 / NRRL 194 / M139) (Aspergillus nidulans).